Consider the following 465-residue polypeptide: MKDVVLVKSLYRNTSEYSDKKVKISGWIRTLRASNAFGFIEVNDGSFFKNVQVVFDSAKISNYKEISKLPISSSISVIGTLVETPDSKQPFEIQAEEIIVEGMSDSDYPLQKKRHTFEYLRTIAHLRPRSNAFSATFRVRSVAAYAIHKFFQDQGFVYTHTPILTGSDCEGAGEMFRVTTLDMMAPPISEEGGIDFSQDFFGKETNLTVSGQLNAECFALAFRNIYTFGPTFRAENSNTVKHAAEFWMIEPEMAFADLIDDMEVAENMLKYVIKYVMDECPEEIAFFNQFVDKGLLERLNHVVNSEFGKVTYTEAVKLLQESGKEFEYPVEWGIDLQTEHERYLTEQIFKKPVFVTDYPKDIKAFYMRLNEDGKTVAAMDCLVPGIGEIIGGSQREERLDVLKARMAELNLNEEDYWWYLELRKYGETVHSGFGLGFERLIMYITGMANIRDVIPFPRTTGTAEF.

Belongs to the class-II aminoacyl-tRNA synthetase family. Homodimer.

The protein resides in the cytoplasm. The catalysed reaction is tRNA(Asn) + L-asparagine + ATP = L-asparaginyl-tRNA(Asn) + AMP + diphosphate + H(+). The polypeptide is Asparagine--tRNA ligase (Clostridium perfringens (strain SM101 / Type A)).